A 37-amino-acid polypeptide reads, in one-letter code: Large ribosomal subunit protein bL36c (37 aa).

Belongs to the bacterial ribosomal protein bL36 family.

It localises to the plastid. The protein localises to the chloroplast. This chain is Large ribosomal subunit protein bL36c, found in Adiantum capillus-veneris (Maidenhair fern).